The following is a 513-amino-acid chain: Ferulic acid decarboxylase 1 (513 aa).

Positions 174, 197, and 240 each coordinate Mn(2+). Prenylated FMN contacts are provided by residues 174–179 (NWSIAR), 196–197 (QH), and Glu240. Glu289 (proton donor) is an active-site residue. Position 405 (Lys405) interacts with prenylated FMN.

Belongs to the UbiD family. UbiD-like/FDC subfamily. In terms of assembly, homodimer. May form higher order oligomers. It depends on Mn(2+) as a cofactor. The cofactor is prenylated FMN.

The protein resides in the cytoplasm. It carries out the reaction (E)-4-coumarate + H(+) = 4-vinylphenol + CO2. The enzyme catalyses (E)-cinnamate + H(+) = styrene + CO2. It catalyses the reaction (E)-ferulate + H(+) = 2-methoxy-4-vinylphenol + CO2. In terms of biological role, catalyzes the reversible decarboxylation of aromatic carboxylic acids like ferulic acid, p-coumaric acid or cinnamic acid, producing the corresponding vinyl derivatives 4-vinylphenol, 4-vinylguaiacol, and styrene, respectively, which play the role of aroma metabolites. This is Ferulic acid decarboxylase 1 from Candida dubliniensis (strain CD36 / ATCC MYA-646 / CBS 7987 / NCPF 3949 / NRRL Y-17841) (Yeast).